Here is a 1309-residue protein sequence, read N- to C-terminus: MASAARGESSNPYGGGLGTGGKFRKPTARRSQKTPYDRPTTSVRNAGLGGGDVRGGGWLSKLVDPAQRLITYSAQRLFGSLSRKRLGSGETPLQSPEQQKQLPERGVNQETKVGHKEDVSNLSMKNGLIRMEDTNASVDPPKDGFTDLEKILQGKTFTRSEVDRLTTLLRSKAADSSTMNEEQRNEVGMVVRHPPSHERDRTHPDNGSMNTLVSTPPGSLRTLDECIASPAQLAKAYMGSRPSEVTPSMLGLRGQAGREDSVFLNRTPFPQKSPTMSLVTKPSGQRPLENGFVTPRSRGRSAVYSMARTPYSRPQSSVKIGSLFQASPSKWEESLPSGSRQGFQSGLKRRSSVLDNDIGSVGPVRRIRQKSNLSSRSLALPVSESPLSVRANGGEKTTHTSKDSAEDIPGSSFNLVPTKSSEMASKILQQLDKLVSTREKSPSKLSPSMLRGPALKSLQNVEAPKFLGNLPEKKANSPDSSYQKQEISRESVSREVLAQSEKTGDAVDGTSKTGSSKDQDMRGKGVYMPLTNSLEEHPPKKRSFRMSAHEDFLELDDDLGAASTPCEVAEKQNAFEVEKSHISMPIGEKPLTPSEAMPSTSYISNGDASQGTSNGSLETERNKFVAFPIEAVQQSNMASEPTSKFIQGTEKSSISSGKPTSEEKRIPLEEPKKPAAVFPNISFSPPATGLLNQNSGASADIKLEKTSSTAFGVSEAWAKPTESKKTFSNSASGAESSTSAAPTLNGSIFSAGANAVTPPPSNGSLTSSPSFPPSISNIPSDNSVGDMPSTVQSFAATHNSSSIFGKLPTSNDSNSQSTSASPLSSTSPFKFGQPAAPFSAPAVSESSGQISKETEVKNATFGNTSTFKFGGMASADQSTGIVFGAKSAENKSRPGFVFGSSSVVGGSTLNPSTAAASAPESSGSLIFGVTSSSTPGTETSKISASSAATNTGNSVFGTSSFAFTSSGSSMVGGVSASTGSSVFGFNAVSSASATSSQSQASNLFGAGNAQTGNTGSGTTTSTQSIPFQFGSSPSAPSFGLSGNSSLASNSSPFGFSKSEPAVFTSVSTPQLSSTNSSASSSSTMSSPLFGTSWQAPNSSPNSGPVFSSSFTTSSTPTTFSFGGSSAATVSSTTTPIFGASTNNTPSPSPIFGFGSTPPTTPQQPVFGNSGTPSQSLFGNSTPGFAFGAPNNGNGINNNQQVSMEDSMAEDTDQANRASMVAPMFGQAAVSMPQPNFAFGGGAATQPPSMANPFQFGGQPMASTLQNASPFQASQSLEFQGGGSFSLGSTGGGDKSGRRIFKAKKSTRKK.

Disordered regions lie at residues 1-58, 83-118, 173-210, 266-296, 329-348, 384-417, 467-538, 594-617, and 635-680; these read MASA…GGGW, RKRLGSGETPLQSPEQQKQLPERGVNQETKVGHKED, AADSSTMNEEQRNEVGMVVRHPPSHERDRTHPDNGSMN, RTPFPQKSPTMSLVTKPSGQRPLENGFVTPR, SKWEESLPSGSRQGFQSGLK, ESPLSVRANGGEKTTHTSKDSAEDIPGSSFNLVP, LGNL…EEHP, SEAMPSTSYISNGDASQGTSNGSL, and SNMA…VFPN. The 25 X 2 AA repeats of F-G stretch occupies residues 2–677; the sequence is ASAARGESSN…LEEPKKPAAV (676 aa). Residues 22–32 show a composition bias toward basic residues; it reads KFRKPTARRSQ. The span at 47-58 shows a compositional bias: gly residues; sequence GLGGGDVRGGGW. Residues 91–101 show a composition bias toward polar residues; the sequence is TPLQSPEQQKQ. A compositionally biased stretch (basic and acidic residues) spans 195–204; sequence PSHERDRTHP. A compositionally biased stretch (polar residues) spans 268-283; that stretch reads PFPQKSPTMSLVTKPS. Basic and acidic residues predominate over residues 396–405; the sequence is KTTHTSKDSA. Polar residues-rich tracts occupy residues 597–617 and 635–659; these read MPSTSYISNGDASQGTSNGSL and SNMASEPTSKFIQGTEKSSISSGKP. Over residues 660 to 673 the composition is skewed to basic and acidic residues; sequence TSEEKRIPLEEPKK. Copy 1 of the repeat occupies 711 to 712; sequence FG. The segment at 719-865 is disordered; the sequence is KPTESKKTFS…VKNATFGNTS (147 aa). Low complexity-rich tracts occupy residues 728–741 and 767–783; these read SNSASGAESSTSAA and SSPSFPPSISNIPSDNS. Positions 789-803 are enriched in polar residues; it reads STVQSFAATHNSSSI. Copy 2 of the repeat occupies 804–805; it reads FG. Positions 809–827 are enriched in low complexity; sequence TSNDSNSQSTSASPLSSTS. 12 consecutive repeat copies span residues 831-832, 861-862, 869-870, 883-884, 898-899, 927-928, 956-957, 983-984, 1004-1005, 1029-1030, 1038-1039, and 1053-1054. Positions 1004-1023 are enriched in low complexity; it reads FGAGNAQTGNTGSGTTTSTQ. The tract at residues 1004 to 1028 is disordered; sequence FGAGNAQTGNTGSGTTTSTQSIPFQ. Residues 1068–1086 show a composition bias toward low complexity; that stretch reads TPQLSSTNSSASSSSTMSS. Positions 1068–1105 are disordered; that stretch reads TPQLSSTNSSASSSSTMSSPLFGTSWQAPNSSPNSGPV. The stretch at 1089-1090 is repeat 15; it reads FG. The span at 1096–1105 shows a compositional bias: low complexity; it reads PNSSPNSGPV. A run of 10 repeats spans residues 1121–1122, 1137–1138, 1151–1152, 1153–1154, 1166–1167, 1177–1178, 1186–1187, 1224–1225, 1238–1239, and 1255–1256. The disordered stretch occupies residues 1278 to 1309; the sequence is FQGGGSFSLGSTGGGDKSGRRIFKAKKSTRKK. The segment covering 1279-1293 has biased composition (gly residues); that stretch reads QGGGSFSLGSTGGGD. The span at 1297–1309 shows a compositional bias: basic residues; the sequence is RRIFKAKKSTRKK.

Part of the nuclear pore complex (NPC). The NPC has an eight-fold symmetrical structure comprising a central transport channel and two rings, the cytoplasmic and nuclear rings, to which eight filaments are attached. The cytoplasmic filaments have loose ends, while the nuclear filaments are joined in a distal ring, forming a nuclear basket. NPCs are highly dynamic in configuration and composition, and can be devided in 3 subcomplexes, the NUP62 subcomplex, the NUP107-160 subcomplex and the NUP93 subcomplex, containing approximately 30 different nucleoporin proteins. Interacts with EER5, anchoring the TREX-2 complex on the nuclear pore complex. Interacts with UCH1 and UCH2.

It is found in the nucleus envelope. Its subcellular location is the nucleus. The protein localises to the nuclear pore complex. The protein resides in the cytoplasm. It localises to the cytosol. Nucleoporin required for nuclear mRNA export. Functions as an adapter and/or regulator molecule in the periphery of the nuclear pore complex (NPC). May interact with importin proteins and mediate active nucleocytoplasmic transport through the NPC. Involved in regulation of nuclear morphology. The chain is Nuclear pore complex protein NUP1 from Arabidopsis thaliana (Mouse-ear cress).